Reading from the N-terminus, the 656-residue chain is DNA ligase (656 aa).

Residues 32–36 (DAIYD) and 81–82 (SL) each bind NAD(+). The N6-AMP-lysine intermediate role is filled by lysine 112. The NAD(+) site is built by arginine 133, glutamate 167, and lysine 306. Residues cysteine 400, cysteine 403, cysteine 416, and cysteine 421 each coordinate Zn(2+). One can recognise a BRCT domain in the interval 577 to 656 (KSSSVFNNKT…ELLKRLKELD (80 aa)).

The protein belongs to the NAD-dependent DNA ligase family. LigA subfamily. The cofactor is Mg(2+). Requires Mn(2+) as cofactor.

It carries out the reaction NAD(+) + (deoxyribonucleotide)n-3'-hydroxyl + 5'-phospho-(deoxyribonucleotide)m = (deoxyribonucleotide)n+m + AMP + beta-nicotinamide D-nucleotide.. Functionally, DNA ligase that catalyzes the formation of phosphodiester linkages between 5'-phosphoryl and 3'-hydroxyl groups in double-stranded DNA using NAD as a coenzyme and as the energy source for the reaction. It is essential for DNA replication and repair of damaged DNA. The polypeptide is DNA ligase (Helicobacter pylori (strain ATCC 700392 / 26695) (Campylobacter pylori)).